The following is an 89-amino-acid chain: Putative regulatory protein RBAM_015500 (89 aa).

It belongs to the RemA family.

This chain is Putative regulatory protein RBAM_015500, found in Bacillus velezensis (strain DSM 23117 / BGSC 10A6 / LMG 26770 / FZB42) (Bacillus amyloliquefaciens subsp. plantarum).